Here is a 934-residue protein sequence, read N- to C-terminus: Serine/threonine-protein kinase PknD (934 aa).

Residues 4–296 (YELIRLIGKG…ELRQALQPYL (293 aa)) form the Protein kinase domain. ATP is bound by residues 10–18 (IGKGGMGEV) and lysine 33. Residue aspartate 138 is the Proton acceptor of the active site.

Belongs to the protein kinase superfamily. Ser/Thr protein kinase family. In terms of processing, autophosphorylated on serine and threonine residues.

It catalyses the reaction L-seryl-[protein] + ATP = O-phospho-L-seryl-[protein] + ADP + H(+). The enzyme catalyses L-threonyl-[protein] + ATP = O-phospho-L-threonyl-[protein] + ADP + H(+). Its function is as follows. Together with the serine/threonine kinase Pkn1, may play a role in the specific interactions with host proteins during intracellular growth. This Chlamydia trachomatis serovar A (strain ATCC VR-571B / DSM 19440 / HAR-13) protein is Serine/threonine-protein kinase PknD.